A 663-amino-acid polypeptide reads, in one-letter code: Pescadillo homolog (663 aa).

Residues 311–321 show a composition bias toward basic and acidic residues; sequence QLKEDESKSDE. Disordered regions lie at residues 311–360, 428–447, and 504–663; these read QLKE…YSSS, TNED…GPNQ, and AQQT…AQKA. Positions 322–334 are enriched in acidic residues; the sequence is TAEEDAEADDEEK. In terms of domain architecture, BRCT spans 361 to 477; sequence DPSQLFANFT…ELKSPELYAP (117 aa). A coiled-coil region spans residues 501–663; it reads PLEAQQTEAE…KLEKEKAQKA (163 aa). Acidic residues predominate over residues 526–567; it reads DGSDVENDMDVDEAEDDEEEEEGDEEDAEEAEEEDAEEDEEE. A compositionally biased stretch (basic and acidic residues) spans 591–620; that stretch reads VDSKTKAKLEQRKALEKKAREEAEDLERAK.

The protein belongs to the pescadillo family. In terms of assembly, component of the NOP7 complex, composed of erb1, nop7 and ytm1. The complex is held together by erb1, which interacts with nop7 via its N-terminal domain and with ytm1 via a high-affinity interaction between the seven-bladed beta-propeller domains of the 2 proteins. The NOP7 complex associates with the 66S pre-ribosome.

It localises to the nucleus. Its subcellular location is the nucleolus. It is found in the nucleoplasm. Functionally, component of the NOP7 complex, which is required for maturation of the 25S and 5.8S ribosomal RNAs and formation of the 60S ribosome. The chain is Pescadillo homolog (nop7) from Neurospora crassa (strain ATCC 24698 / 74-OR23-1A / CBS 708.71 / DSM 1257 / FGSC 987).